The following is a 1199-amino-acid chain: RNA-binding protein 20 (1199 aa).

3 disordered regions span residues 1 to 55, 163 to 186, and 320 to 346; these read MVLA…PQAS, PSTA…SLPS, and ERPP…PASQ. Residues 25–42 are compositionally biased toward low complexity; it reads VMPGVQGPSVPQGQQGMQ. A compositionally biased stretch (pro residues) spans 43 to 52; it reads PLPPPPPPQP. Positions 170–183 are enriched in low complexity; sequence SPPSQTGGPGPSVS. Residues 410 to 444 form a U1-type zinc finger; that stretch reads HLPHICSICDKKVFDLKDWELHVKGKLHAQKCLLF. One can recognise an RRM domain in the interval 520-595; sequence RVVHICNLPE…EKLLIRMSTR (76 aa). Residues 626–636 are compositionally biased toward basic and acidic residues; sequence EADRYGPERPR. Disordered regions lie at residues 626-685, 720-884, and 944-1077; these read EADR…NGED, REKY…YPTN, and GETL…SQAC. The interval 630–649 is RS; that stretch reads YGPERPRSRSPMSRSLSPRS. S637, S639, S642, S644, and S651 each carry phosphoserine. A compositionally biased stretch (low complexity) spans 638–649; the sequence is RSPMSRSLSPRS. A compositionally biased stretch (basic and acidic residues) spans 667–685; that stretch reads YAWRDEDRETVPRRENGED. S728 carries the post-translational modification Phosphoserine. Composition is skewed to basic and acidic residues over residues 739–758, 770–831, and 859–868; these read KGRE…DKYP, RKEE…KESQ, and ENTRTKKGQD. S787 bears the Phosphoserine mark. S871, S873, and S955 each carry phosphoserine. Residues 962–971 show a composition bias toward polar residues; that stretch reads VPSTSASCPN. Phosphoserine occurs at positions 991, 1026, 1038, 1049, 1054, 1058, 1070, 1088, and 1093. Over residues 1042 to 1055 the composition is skewed to basic and acidic residues; sequence DDCKARGSPEDGSH. Residues 1067–1077 show a composition bias toward polar residues; sequence PTESDLQSQAC. A Matrin-type zinc finger spans residues 1133 to 1164; sequence FYCKLCGLFYTSEEAAKVSHCRSTVHYRNLQK. Residues 1172-1199 are disordered; that stretch reads EGLKETEGTDSPSPERGGIGPHLERKKL. S1182 and S1184 each carry phosphoserine.

As to quaternary structure, associates with components of the U1 and U2 U1 small nuclear ribonucleoprotein complexes. Post-translationally, phosphorylation regulates the subcellular localization. Phosphorylation of Ser-637 and Ser-639 in the RS (arginine/serine-rich) region promotes nuclear localization of the protein. In contrast, phosphorylation of the C-terminal disordered region promotes localization to cytoplasmic ribonucleoprotein granules. Predominantly expressed in striated muscle, with highest expression in the heart. In differentiating myoblasts, expression correlates with sarcomere assembly: expression peaks when alpha-actinin is localized mainly in mature Z bodies within the nascent myofiber and expression declines as the sarcomeres continue to mature. Also expressed in kidney.

The protein localises to the nucleus. It localises to the cytoplasm. It is found in the cytoplasmic ribonucleoprotein granule. Functionally, RNA-binding protein that acts as a regulator of mRNA splicing of a subset of genes encoding key structural proteins involved in cardiac development, such as TTN (Titin), CACNA1C, CAMK2D or PDLIM5/ENH. Acts as a repressor of mRNA splicing: specifically binds the 5'UCUU-3' motif that is predominantly found within intronic sequences of pre-mRNAs, leading to the exclusion of specific exons in target transcripts. RBM20-mediated exon skipping is hormone-dependent and is essential for TTN isoform transition in both cardiac and skeletal muscles. RBM20-mediated exon skipping of TTN provides substrates for the formation of circular RNA (circRNAs) from the TTN transcripts. Together with RBM24, promotes the expression of short isoforms of PDLIM5/ENH in cardiomyocytes. The sequence is that of RNA-binding protein 20 from Mus musculus (Mouse).